Reading from the N-terminus, the 414-residue chain is Serine/threonine transporter SstT (414 aa).

Residues Thr-2–His-15 lie on the Cytoplasmic side of the membrane. Residues Gly-16–Ser-36 traverse the membrane as a helical segment. Residues Lys-37 to Leu-45 lie on the Periplasmic side of the membrane. The helical transmembrane segment at Leu-46 to Val-66 threads the bilayer. Residues Met-67 to Pro-83 lie on the Cytoplasmic side of the membrane. A helical transmembrane segment spans residues Ile-84 to Phe-104. Topologically, residues Ala-105–Asp-142 are periplasmic. A helical membrane pass occupies residues Ala-143–Leu-163. Residues Arg-164 to Asn-179 lie on the Cytoplasmic side of the membrane. The chain crosses the membrane as a helical span at residues Ala-180–Val-200. Over Ser-201 to Gln-217 the chain is Periplasmic. The chain crosses the membrane as a helical span at residues Leu-218 to Val-238. The Cytoplasmic segment spans residues Trp-239–Asn-299. The chain crosses the membrane as a helical span at residues Met-300–Ile-320. Residues Pro-321–Ser-331 lie on the Periplasmic side of the membrane. A helical membrane pass occupies residues Val-332 to Ile-352. At Pro-353 to Asn-414 the chain is on the cytoplasmic side.

This sequence belongs to the dicarboxylate/amino acid:cation symporter (DAACS) (TC 2.A.23) family.

The protein localises to the cell inner membrane. The enzyme catalyses L-serine(in) + Na(+)(in) = L-serine(out) + Na(+)(out). It catalyses the reaction L-threonine(in) + Na(+)(in) = L-threonine(out) + Na(+)(out). Involved in the import of serine and threonine into the cell, with the concomitant import of sodium (symport system). This Shigella boydii serotype 4 (strain Sb227) protein is Serine/threonine transporter SstT.